The primary structure comprises 209 residues: Uridine kinase (209 aa).

Residue 12–19 (GGTGSGKS) participates in ATP binding.

It belongs to the uridine kinase family.

It localises to the cytoplasm. It catalyses the reaction uridine + ATP = UMP + ADP + H(+). The catalysed reaction is cytidine + ATP = CMP + ADP + H(+). It functions in the pathway pyrimidine metabolism; CTP biosynthesis via salvage pathway; CTP from cytidine: step 1/3. It participates in pyrimidine metabolism; UMP biosynthesis via salvage pathway; UMP from uridine: step 1/1. This Clostridium tetani (strain Massachusetts / E88) protein is Uridine kinase.